The sequence spans 127 residues: Small ribosomal subunit protein uS11 (127 aa).

Belongs to the universal ribosomal protein uS11 family. As to quaternary structure, part of the 30S ribosomal subunit. Interacts with proteins S7 and S18. Binds to IF-3.

Located on the platform of the 30S subunit, it bridges several disparate RNA helices of the 16S rRNA. Forms part of the Shine-Dalgarno cleft in the 70S ribosome. The chain is Small ribosomal subunit protein uS11 from Flavobacterium psychrophilum (strain ATCC 49511 / DSM 21280 / CIP 103535 / JIP02/86).